The chain runs to 315 residues: Taste receptor type 2 member 129 (315 aa).

The Extracellular portion of the chain corresponds to Met-1–Ser-9. A helical membrane pass occupies residues Ala-10–Val-30. The Cytoplasmic segment spans residues Asn-31–Gln-46. A helical transmembrane segment spans residues Ile-47–Leu-67. Over Ala-68 to Ala-101 the chain is Extracellular. The helical transmembrane segment at Cys-102–Leu-122 threads the bilayer. Residues Lys-123–Lys-128 lie on the Cytoplasmic side of the membrane. Residues Val-129–Asn-149 traverse the membrane as a helical segment. Topologically, residues Ser-150 to Cys-185 are extracellular. A glycan (N-linked (GlcNAc...) asparagine) is linked at Asn-170. Residues Ile-186–Leu-206 traverse the membrane as a helical segment. Over Trp-207–Gln-233 the chain is Cytoplasmic. Residues Thr-234 to Trp-254 traverse the membrane as a helical segment. The Extracellular portion of the chain corresponds to Arg-255–Arg-266. A helical membrane pass occupies residues Phe-267 to Asp-287. Topologically, residues Thr-288–Arg-315 are cytoplasmic.

It belongs to the G-protein coupled receptor T2R family.

Its subcellular location is the membrane. Putative taste receptor which may play a role in the perception of bitterness. This Rattus norvegicus (Rat) protein is Taste receptor type 2 member 129.